The sequence spans 655 residues: MTIEKIFTPQDDAFYAVITHAAGPQGALPLTPQMLMESPSGNLFGMTQNAGMGWDANKLTGKEVLIIGTQGGIRAGDGRPIALGYHTGHWEIGMQMQAAAKEITRNGGIPFAAFVSDPCDGRSQGTHGMFDSLPYRNDAAIVFRRLIRSLPTRRAVIGVATCDKGLPATMIALAAMHDLPTILVPGGATLPPTVGEDAGKVQTIGARFANHELSLQEAAELGCRACASPGGGCQFLGTAGTSQVVAEALGLALPHSALAPSGQAVWLEIARQSARAVSELDSRGITTRDILSDKAIENAMVIHAAFGGSTNLLLHIPAIAHAAGCTIPDVEHWTRINRKVPRLVSVLPNGPDYHPTVRAFLAGGVPEVMLHLRDLGLLHLDAMTVTGQTVGENLEWWQASERRARFRQCLREQDGVEPDDVILPPEKAKAKGLTSTVCFPTGNIAPEGSVIKATAIDPSVVGEDGVYHHTGRVRVFVSEAQAIKAIKREEIVQGDIMVVIGGGPSGTGMEETYQLTSALKHISWGKTVSLITDARFSGVSTGACFGHVSPEALAGGPIGKLRDNDIIEIAVDRLTLTGSVNFIGTADNPLTPEEGARELARRQTHPDLHAHDFLPDDTRLWAALQSVSGGTWKGCIYDTDKIIEVINAGKKALGI.

The protein belongs to the IlvD/Edd family.

The enzyme catalyses D-xylonate = 2-dehydro-3-deoxy-D-arabinonate + H2O. Its function is as follows. Catalyzes the dehydration of D-xylonic acid to form 2-dehydro-3-deoxy-D-pentonate. In Escherichia coli (strain K12), this protein is D-xylonate dehydratase YagF (yagF).